We begin with the raw amino-acid sequence, 577 residues long: uncharacterized protein (577 aa).

Composition is skewed to polar residues over residues 1 to 21 (MSST…QSAS) and 68 to 87 (SFQN…SKTE). 2 disordered regions span residues 1–24 (MSST…SAHP) and 68–93 (SFQN…PDDV). Transmembrane regions (helical) follow at residues 139 to 159 (CILA…AVPA), 174 to 194 (LLTM…WAPL), 204 to 224 (ILIG…GKDI), 232 to 252 (FFAG…LADM), 262 to 282 (ITLF…VGGF), 292 to 312 (WTEY…YLFC), 367 to 387 (PICF…YLLL), 402 to 422 (MGVA…GSGI), 447 to 467 (LPPM…LSWS), 473 to 493 (VNWV…LLIF), 504 to 526 (YLFR…AAGF), and 543 to 563 (GSLL…FFFF).

The protein belongs to the major facilitator superfamily. CAR1 family.

The protein localises to the endoplasmic reticulum. The protein resides in the membrane. This is an uncharacterized protein from Schizosaccharomyces pombe (strain 972 / ATCC 24843) (Fission yeast).